Consider the following 363-residue polypeptide: 3-dehydroquinate synthase (363 aa).

NAD(+)-binding positions include 107 to 111 (GVIGD), 131 to 132 (TT), lysine 144, and lysine 153. The Zn(2+) site is built by glutamate 186, histidine 251, and histidine 268.

The protein belongs to the sugar phosphate cyclases superfamily. Dehydroquinate synthase family. Requires Co(2+) as cofactor. It depends on Zn(2+) as a cofactor. NAD(+) is required as a cofactor.

It localises to the cytoplasm. The enzyme catalyses 7-phospho-2-dehydro-3-deoxy-D-arabino-heptonate = 3-dehydroquinate + phosphate. It participates in metabolic intermediate biosynthesis; chorismate biosynthesis; chorismate from D-erythrose 4-phosphate and phosphoenolpyruvate: step 2/7. Functionally, catalyzes the conversion of 3-deoxy-D-arabino-heptulosonate 7-phosphate (DAHP) to dehydroquinate (DHQ). The sequence is that of 3-dehydroquinate synthase from Nostoc punctiforme (strain ATCC 29133 / PCC 73102).